Reading from the N-terminus, the 169-residue chain is Crossover junction endodeoxyribonuclease RuvC (169 aa).

Catalysis depends on residues Asp-13, Glu-73, and Asp-145. Residues Asp-13, Glu-73, and Asp-145 each coordinate Mg(2+).

Belongs to the RuvC family. As to quaternary structure, homodimer which binds Holliday junction (HJ) DNA. The HJ becomes 2-fold symmetrical on binding to RuvC with unstacked arms; it has a different conformation from HJ DNA in complex with RuvA. In the full resolvosome a probable DNA-RuvA(4)-RuvB(12)-RuvC(2) complex forms which resolves the HJ. The cofactor is Mg(2+).

Its subcellular location is the cytoplasm. It catalyses the reaction Endonucleolytic cleavage at a junction such as a reciprocal single-stranded crossover between two homologous DNA duplexes (Holliday junction).. The RuvA-RuvB-RuvC complex processes Holliday junction (HJ) DNA during genetic recombination and DNA repair. Endonuclease that resolves HJ intermediates. Cleaves cruciform DNA by making single-stranded nicks across the HJ at symmetrical positions within the homologous arms, yielding a 5'-phosphate and a 3'-hydroxyl group; requires a central core of homology in the junction. The consensus cleavage sequence is 5'-(A/T)TT(C/G)-3'. Cleavage occurs on the 3'-side of the TT dinucleotide at the point of strand exchange. HJ branch migration catalyzed by RuvA-RuvB allows RuvC to scan DNA until it finds its consensus sequence, where it cleaves and resolves the cruciform DNA. The chain is Crossover junction endodeoxyribonuclease RuvC from Solidesulfovibrio magneticus (strain ATCC 700980 / DSM 13731 / RS-1) (Desulfovibrio magneticus).